A 687-amino-acid polypeptide reads, in one-letter code: UvrABC system protein B (687 aa).

The Helicase ATP-binding domain occupies 26 to 414 (EGLAAGEMYQ…GAVIEQVVRP (389 aa)). 39-46 (GVTGSGKT) is an ATP binding site. The Beta-hairpin signature appears at 92 to 115 (YYDYYQPEAYVPASDTYIGKDASV). The 167-residue stretch at 430–596 (QVDDLLSEIR…GIQKAVREII (167 aa)) folds into the Helicase C-terminal domain. The UVR domain maps to 630-665 (AKRLQQLERQMHKHAQNLEFEQAARLRDEIKRIKGW).

This sequence belongs to the UvrB family. Forms a heterotetramer with UvrA during the search for lesions. Interacts with UvrC in an incision complex.

Its subcellular location is the cytoplasm. Its function is as follows. The UvrABC repair system catalyzes the recognition and processing of DNA lesions. A damage recognition complex composed of 2 UvrA and 2 UvrB subunits scans DNA for abnormalities. Upon binding of the UvrA(2)B(2) complex to a putative damaged site, the DNA wraps around one UvrB monomer. DNA wrap is dependent on ATP binding by UvrB and probably causes local melting of the DNA helix, facilitating insertion of UvrB beta-hairpin between the DNA strands. Then UvrB probes one DNA strand for the presence of a lesion. If a lesion is found the UvrA subunits dissociate and the UvrB-DNA preincision complex is formed. This complex is subsequently bound by UvrC and the second UvrB is released. If no lesion is found, the DNA wraps around the other UvrB subunit that will check the other stand for damage. The chain is UvrABC system protein B from Nitrosococcus oceani (strain ATCC 19707 / BCRC 17464 / JCM 30415 / NCIMB 11848 / C-107).